The primary structure comprises 2375 residues: MNLDSLSLALSQISYLVDNLTKKNYRASQQEIQHIVNRHGPEADRHLLRCLFSHVDFSGDGKSSGKDFHQTQFLIQECASLITKPNFISTLSYAIDNPLHYQKSLKPAPHLFAQLSKVLKLSKVQEVIFGLALLNSSSPDLRGFAAQFIKQKLPDLLRSYIDADVSGNQEGGFQDIAIEVLHLLLSHLLFGQKGAFGVGQEQIDAFLKTLRRDFPQERCPVVLAPLLYPEKRDILMDRILPDSGGVAKTMMESSLADFMQEVGYGFCASIEECRNIIMQFGVREVTAAQVARVLGMMARTHSGLTDGIPLQSISAPGSGIWSDGKDKSEGAQAHTWNVEVLIDVLKELNPSLNFKEVTYELDHPGFQIRDSKGLHNVVYGIQRGLGMEVFPVDFIYRPWKHAEGQLSFIQHSLINPEVFCFADYPCHTVATDILKAPPEDDNREIATWKSLDLIESLLRLAEVGQYEQVKQLFSFPIKHCPDMLVLALLQINTSWHTLRHELISTLMPIFLGNHPNSAIILHYAWHGQGQSPSIRQLIMHAMAEWYMRGEQYDQAKLSRILDVAQDLKALSMLLNGTPFAFVIDLAALASRREYLKLDKWLTDKIREHGEPFIQACMTFLKRRCPSILGGLAPEKDQPKSAQLPAETLATMLACLQACAGSVSQELSETILTMVANCSNVMNKARQPPPGVMPKGRPPSASSLDAISPVQIDPLAGMASLSIGGSAAPHTQSMQGFPPNLGSAFSTPQSPAKAFPPLSTPNQTTAFSGIGGLSSQLPGGLGTGSLTGIGTGALGLPAVNNDPFVQRKLGTSGLNQPTFQQSKMKPSDLSQVWPEANQHFSKEIDDEANSYFQRIYNHPPHPTMSVDEVLEMLQRFKDSTIKREREVFNCMLRNLFEEYRFFPQYPDKELHITACLFGGIIEKGLVTYMALGLALRYVLEALRKPFGSKMYYFGIAALDRFKNRLKDYPQYCQHLASISHFMQFPHHLQEYIEYGQQSRDPPVKMQGSITTPGSIALAQAQAQAQVPAKAPLAGQVNTMVTTSTTTTVAKTVTVTKPTGVSFKKDVPPSINTTNIDTLLVATDQTERIVEPPENIQEKIAFIFNNLSQSNMTQKVEELKETVKEEFMPWVSQYLVMKRVSIEPNFHSLYSNFLDTLKNPEFNKMVLNETYRNIKVLLTSDKAAANFSDRSLLKNLGHWLGMITLAKNKPILHTDLDVKSLLLEAYVKGQQELLYVVPFVAKVLESSIRSLVFRPPNPWTMAIMNVLAELHQEHDLKLNLKFEIEVLCKNLALDINELKPGNLLKDKDRLKNLDEQLSAPKKDVKQPEELPAITTTTTSTTPATSTTCTATVPPQPQYSYHDINVYSLAGLAPHITLNPTIPLFQAHPQLKQCVRQAIERAVQELVHPVVDRSIKIAMTTCEQIVRKDFALDSEESRMRIAAHHMMRNLTAGMAMITCREPLLMSISTNLKNSFASALRTASPQQREMMDQAAAQLAQDNCELACCFIQKTAVEKAGPEMDKRLATEFELRKHARQEGRRYCDPVVLTYQAERMPEQIRLKVGGVDPKQLAVYEEFARNVPGFLPTNDLSQPTGFLAQPMKQAWATDDVAQIYDKCITELEQHLHAIPPTLAMNPQAQALRSLLEVVVLSRNSRDAIAALGLLQKAVEGLLDATSGADADLLLRYRECHLLVLKALQDGRAYGSPWCNKQITRCLIECRDEYKYNVEAVELLIRNHLVNMQQYDLHLAQSMENGLNYMAVAFAMQLVKILLVDERSVAHITEADLFHTIETLMRINAHSRGNAPEGLPQLMEVVRSNYEAMIDRAHGGPNFMMHSGISQASEYDDPPGLREKAEYLLREWVNLYHSAAAGRDSTKAFSAFVGQMHQQGILKTDDLITRFFRLCTEMCVEISYRAQAEQQHNPAANPTMIRAKCYHNLDAFVRLIALLVKHSGEATNTVTKINLLNKVLGIVVGVLLQDHDVRQSEFQQLPYHRIFIMLLLELNAPEHVLETINFQTLTAFCNTFHILRPTKAPGFVYAWLELISHRIFIARMLAHTPQQKGWPMYAQLLIDLFKYLAPFLRNVELTKPMQILYKGTLRVLLVLLHDFPEFLCDYHYGFCDVIPPNCIQLRNLILSAFPRNMRLPDPFTPNLKVDMLSEINIAPRILTNFTGVMPPQFKKDLDSYLKTRSPVTFLSDLRSNLQVSNEPGNRYNLQLINALVLYVGTQAIAHIHNKGSTPSMSTITHSAHMDIFQNLAVDLDTEGRYLFLNAIANQLRYPNSHTHYFSCTMLYLFAEANTEAIQEQITRVLLERLIVNRPHPWGLLITFIELIKNPAFKFWNHEFVHCAPEIEKLFQSVAQCCMGQKQAQQVMEGTGAS.

3 short sequence motifs (LXXLL) span residues 153–157 (LPDLL), 181–185 (LHLLL), and 223–227 (LAPLL). Phosphoserine is present on Ser-318. Positions 570-574 (LSMLL) match the LXXLL motif. Positions 725-770 (SAAPHTQSMQGFPPNLGSAFSTPQSPAKAFPPLSTPNQTTAFSGIG) are disordered. Positions 799–1014 (NNDPFVQRKL…QGSITTPGSI (216 aa)) are interaction with ZFP36. A Phosphoserine modification is found at Ser-1060. Residues 1089-1604 (EPPENIQEKI…AQPMKQAWAT (516 aa)) are interaction with CNOT6, CNOT6L, CNOT7 and CNOT8. The segment covering 1314–1326 (QLSAPKKDVKQPE) has biased composition (basic and acidic residues). A disordered region spans residues 1314 to 1351 (QLSAPKKDVKQPEELPAITTTTTSTTPATSTTCTATVP). The span at 1332 to 1349 (TTTTTSTTPATSTTCTAT) shows a compositional bias: low complexity. Short sequence motifs (LXXLL) lie at residues 1638 to 1642 (LRSLL), 1941 to 1945 (LIALL), and 2095 to 2099 (LRVLL).

It belongs to the CNOT1 family. As to quaternary structure, component of the CCR4-NOT complex; distinct complexes seem to exist that differ in the participation of probably mutually exclusive catalytic subunits. In the complex, interacts directly with CNOT6, CNOT6L, CNOT7 or CNOT8. Interacts in a ligand-dependent fashion with ESR1 and RXRA. Interacts with NANOS2, TOB1 and ZFP36. Interacts with TNRC6A, TNRC6B or TNRC6C; the interactions are direct. Interacts with YTHDF2; the interaction is direct and promotes recruitment of the CCR4-NOT complex to N6-methyladenosine (m6A)-containing mRNAs, leading to their deadenylation and subsequent degradation. Interacts with EIF4ENIF1/4E-T. Interacts in an RNA-independent manner with BICC1 (via KH domains). Interacts with TEX13A; the interaction may inhibit CNOT1 binding to mRNA and subsequently CNOT1-mediated mRNA degradation.

The protein localises to the cytoplasm. Its subcellular location is the P-body. It localises to the nucleus. Functionally, scaffolding component of the CCR4-NOT complex which is one of the major cellular mRNA deadenylases and is linked to various cellular processes including bulk mRNA degradation, miRNA-mediated repression, translational repression during translational initiation and general transcription regulation. Additional complex functions may be a consequence of its influence on mRNA expression. Its scaffolding function implies its interaction with the catalytic complex module and diverse RNA-binding proteins mediating the complex recruitment to selected mRNA 3'UTRs. Involved in degradation of AU-rich element (ARE)-containing mRNAs probably via association with ZFP36. Mediates the recruitment of the CCR4-NOT complex to miRNA targets and to the RISC complex via association with TNRC6A, TNRC6B or TNRC6C. Acts as a transcriptional repressor. Represses the ligand-dependent transcriptional activation by nuclear receptors. Involved in the maintenance of embryonic stem (ES) cell identity; prevents their differentiation towards extraembryonic trophectoderm lineages. Plays a role in rapid sperm motility via mediating timely mRNA turnover. In Mus musculus (Mouse), this protein is CCR4-NOT transcription complex subunit 1 (Cnot1).